Here is a 257-residue protein sequence, read N- to C-terminus: Uridylate kinase (257 aa).

Position 8 to 11 (8 to 11 (KLSG)) interacts with ATP. The involved in allosteric activation by GTP stretch occupies residues 21–26 (GSAGFG). A UMP-binding site is contributed by glycine 56. ATP-binding residues include glycine 57 and arginine 61. UMP is bound by residues aspartate 75 and 136 to 143 (NGAPFFTT). Residues asparagine 164, tyrosine 170, and aspartate 173 each coordinate ATP.

The protein belongs to the UMP kinase family. As to quaternary structure, homohexamer.

Its subcellular location is the cytoplasm. The catalysed reaction is UMP + ATP = UDP + ADP. Its pathway is pyrimidine metabolism; CTP biosynthesis via de novo pathway; UDP from UMP (UMPK route): step 1/1. Its activity is regulated as follows. Allosterically activated by GTP. Inhibited by UTP. Functionally, catalyzes the reversible phosphorylation of UMP to UDP. In Deinococcus geothermalis (strain DSM 11300 / CIP 105573 / AG-3a), this protein is Uridylate kinase.